We begin with the raw amino-acid sequence, 80 residues long: Small ribosomal subunit protein bS16c (80 aa).

The protein belongs to the bacterial ribosomal protein bS16 family.

The protein localises to the plastid. Its subcellular location is the chloroplast. This is Small ribosomal subunit protein bS16c from Lotus japonicus (Lotus corniculatus var. japonicus).